The following is a 207-amino-acid chain: Ribonuclease HII (207 aa).

The region spanning 12–201 is the RNase H type-2 domain; sequence DLVAGVDEVG…VRAAWEAREG (190 aa). A divalent metal cation-binding residues include Asp-18, Glu-19, and Asp-110.

This sequence belongs to the RNase HII family. Mn(2+) is required as a cofactor. Mg(2+) serves as cofactor.

The protein localises to the cytoplasm. It catalyses the reaction Endonucleolytic cleavage to 5'-phosphomonoester.. Its function is as follows. Endonuclease that specifically degrades the RNA of RNA-DNA hybrids. In Pseudomonas putida (strain ATCC 47054 / DSM 6125 / CFBP 8728 / NCIMB 11950 / KT2440), this protein is Ribonuclease HII.